We begin with the raw amino-acid sequence, 135 residues long: Small ribosomal subunit protein bS18 (135 aa).

The segment at Met-1–Phe-65 is disordered. The span at Pro-9–Arg-41 shows a compositional bias: gly residues. A compositionally biased stretch (basic and acidic residues) spans Gly-42–Gly-61.

It belongs to the bacterial ribosomal protein bS18 family. In terms of assembly, part of the 30S ribosomal subunit. Forms a tight heterodimer with protein bS6.

Functionally, binds as a heterodimer with protein bS6 to the central domain of the 16S rRNA, where it helps stabilize the platform of the 30S subunit. This is Small ribosomal subunit protein bS18 from Anaeromyxobacter dehalogenans (strain 2CP-C).